A 121-amino-acid polypeptide reads, in one-letter code: Large ribosomal subunit protein bL19 (121 aa).

Belongs to the bacterial ribosomal protein bL19 family.

In terms of biological role, this protein is located at the 30S-50S ribosomal subunit interface and may play a role in the structure and function of the aminoacyl-tRNA binding site. The chain is Large ribosomal subunit protein bL19 from Acidothermus cellulolyticus (strain ATCC 43068 / DSM 8971 / 11B).